The following is a 401-amino-acid chain: Multidrug resistance protein MdtH (401 aa).

11 helical membrane-spanning segments follow: residues Y13–I33, S34–L54, M78–L95, P99–F116, L139–L159, F165–L185, V214–I234, A243–I263, F289–L309, L340–G360, and I365–H385.

The protein belongs to the major facilitator superfamily. DHA1 family. MdtH (TC 2.A.1.2.21) subfamily.

It is found in the cell inner membrane. This is Multidrug resistance protein MdtH from Photorhabdus laumondii subsp. laumondii (strain DSM 15139 / CIP 105565 / TT01) (Photorhabdus luminescens subsp. laumondii).